We begin with the raw amino-acid sequence, 140 residues long: uncharacterized protein (140 aa).

This is an uncharacterized protein from Acanthamoeba polyphaga mimivirus (APMV).